Here is a 315-residue protein sequence, read N- to C-terminus: Tyrosine recombinase XerC (315 aa).

Positions 1–103 (MIASFYAFLD…AIKSFAKFCV (103 aa)) constitute a Core-binding (CB) domain. Residues 124–306 (ELPSPLTYEQ…SMKLKKQIHD (183 aa)) form the Tyr recombinase domain. Catalysis depends on residues Arg-164, Lys-188, His-258, Arg-261, and His-284. Tyr-293 functions as the O-(3'-phospho-DNA)-tyrosine intermediate in the catalytic mechanism.

The protein belongs to the 'phage' integrase family. XerC subfamily. Forms a cyclic heterotetrameric complex composed of two molecules of XerC and two molecules of XerD.

Its subcellular location is the cytoplasm. Its function is as follows. Site-specific tyrosine recombinase, which acts by catalyzing the cutting and rejoining of the recombining DNA molecules. The XerC-XerD complex is essential to convert dimers of the bacterial chromosome into monomers to permit their segregation at cell division. It also contributes to the segregational stability of plasmids. The polypeptide is Tyrosine recombinase XerC (Chlamydia muridarum (strain MoPn / Nigg)).